The sequence spans 172 residues: Small ribosomal subunit protein uS5 (172 aa).

Residues 17 to 80 form the S5 DRBM domain; it reads LREKMISVNR…EQARRNMFKV (64 aa).

This sequence belongs to the universal ribosomal protein uS5 family. As to quaternary structure, part of the 30S ribosomal subunit. Contacts proteins S4 and S8.

Functionally, with S4 and S12 plays an important role in translational accuracy. Its function is as follows. Located at the back of the 30S subunit body where it stabilizes the conformation of the head with respect to the body. This is Small ribosomal subunit protein uS5 from Burkholderia lata (strain ATCC 17760 / DSM 23089 / LMG 22485 / NCIMB 9086 / R18194 / 383).